The sequence spans 134 residues: Replication enhancer protein (134 aa).

Belongs to the geminiviridae replication enhancer protein family. In terms of assembly, homooligomer. Interacts with the replication-associated protein (REP). Interacts with host proliferating cell nuclear antigen (PCNA). Interacts with host retinoblastoma-related protein 1 (RBR1), and may thereby deregulate the host cell cycle. Oligomerization and interaction with PCNA are necessary for optimal replication enhancement.

In terms of biological role, increases viral DNA accumulation. Enhances infectivity and symptom expression. In Cynanchum acutum (Little mallow), this protein is Replication enhancer protein.